Here is a 483-residue protein sequence, read N- to C-terminus: MVQGTTSDAGKSTLVAGLCRVLYRRGVRVAPFKPQNMALNSAVTSDGGEIGRAQAVQAQACGLLPHTDMNPVLLKPNTDTGCQVIIHGKVLANLEAMAYHAYKPKAREAVLASWQRLREQYECIIVEGAGSPAEINLRQNDIANMGFAEAADCPVILIADIDRGGVFAHIVGTLALLSESERKRIIGFVINRFRGDIALLQSGLDWLQQETGIPVLGVLPYLRNLHLEAEDAVAKDTPDKPQTWLRVIAPVLPHVSNHTDMDALRMHPHVDFQFIELNEPVPPADLIILPGSKNVRGDLAVLASHGWRDKISRHLRYGGKLMGICGGFQMLGRKIHDPHGLEGDAGSSDGFGWLDMETTLTKEKHLKEVEGKLTFADAVVTGYEIHMGVSSGPALERPLLHIGTQAEGALSEDGQIAGTYLHGLFDHAEATQAWLNWAGYSQLKQAQETIAHYDYLALREASLERLADEVELHLDWNRLQSYL.

A GATase cobBQ-type domain is found at 244-430; sequence WLRVIAPVLP…LHGLFDHAEA (187 aa). Cys-325 serves as the catalytic Nucleophile. The active site involves His-422.

Belongs to the CobB/CobQ family. CobQ subfamily.

It functions in the pathway cofactor biosynthesis; adenosylcobalamin biosynthesis. Catalyzes amidations at positions B, D, E, and G on adenosylcobyrinic A,C-diamide. NH(2) groups are provided by glutamine, and one molecule of ATP is hydrogenolyzed for each amidation. The chain is Cobyric acid synthase from Methylobacillus flagellatus (strain ATCC 51484 / DSM 6875 / VKM B-1610 / KT).